The sequence spans 749 residues: NAD(P)H-quinone oxidoreductase subunit 5, chloroplastic (749 aa).

17 helical membrane-spanning segments follow: residues 9-29, 40-60, 89-109, 125-145, 147-167, 185-205, 219-239, 258-278, 290-312, 327-347, 354-374, 396-416, 425-445, 549-569, 608-628, 694-714, and 725-745; these read WIIP…LLLF, WAFQ…NLSI, IDPL…MVLI, FAYM…SNLI, IYIF…FWFT, GDFG…SFEF, NEVN…GAVA, TPIS…FLVA, IMNF…ALAQ, LGYM…FHLI, ALLF…VGYC, TSFL…CFWS, WLYS…TAFY, LFPI…GIPF, VFSV…YKPV, IIDG…EVIK, and LFFY…LNVF.

It belongs to the complex I subunit 5 family. In terms of assembly, NDH is composed of at least 16 different subunits, 5 of which are encoded in the nucleus.

The protein resides in the plastid. It is found in the chloroplast thylakoid membrane. The catalysed reaction is a plastoquinone + NADH + (n+1) H(+)(in) = a plastoquinol + NAD(+) + n H(+)(out). It catalyses the reaction a plastoquinone + NADPH + (n+1) H(+)(in) = a plastoquinol + NADP(+) + n H(+)(out). NDH shuttles electrons from NAD(P)H:plastoquinone, via FMN and iron-sulfur (Fe-S) centers, to quinones in the photosynthetic chain and possibly in a chloroplast respiratory chain. The immediate electron acceptor for the enzyme in this species is believed to be plastoquinone. Couples the redox reaction to proton translocation, and thus conserves the redox energy in a proton gradient. This chain is NAD(P)H-quinone oxidoreductase subunit 5, chloroplastic (ndhF), found in Atractylodes lancea (Atractylodes japonica).